A 193-amino-acid polypeptide reads, in one-letter code: Probable chemoreceptor glutamine deamidase CheD 1 (193 aa).

The segment at 1 to 26 (MPHTPPAYPAASADHRPPSSPPAEPA) is disordered.

It belongs to the CheD family.

The enzyme catalyses L-glutaminyl-[protein] + H2O = L-glutamyl-[protein] + NH4(+). Probably deamidates glutamine residues to glutamate on methyl-accepting chemotaxis receptors (MCPs), playing an important role in chemotaxis. This chain is Probable chemoreceptor glutamine deamidase CheD 1, found in Chromobacterium violaceum (strain ATCC 12472 / DSM 30191 / JCM 1249 / CCUG 213 / NBRC 12614 / NCIMB 9131 / NCTC 9757 / MK).